The primary structure comprises 226 residues: PKHD-type hydroxylase Nwi_0701 (226 aa).

Residues 78-178 (KVLPPRFNRY…RLAAFFWTQS (101 aa)) enclose the Fe2OG dioxygenase domain. Residues H96, D98, and H159 each contribute to the Fe cation site. R169 is a 2-oxoglutarate binding site.

Requires Fe(2+) as cofactor. It depends on L-ascorbate as a cofactor.

In Nitrobacter winogradskyi (strain ATCC 25391 / DSM 10237 / CIP 104748 / NCIMB 11846 / Nb-255), this protein is PKHD-type hydroxylase Nwi_0701.